Here is a 269-residue protein sequence, read N- to C-terminus: Expansin-B1 (269 aa).

Residues 1–24 (MGSLANNIMVVGAVLAALVAGGSC) form the signal peptide. Asparagine 34 carries an N-linked (GlcNAc...) asparagine glycan. The Expansin-like EG45 domain occupies 63 to 169 (GGACGIKNVN…RRVRCKYPAG (107 aa)). 3 disulfide bridges follow: cysteine 66–cysteine 94, cysteine 97–cysteine 164, and cysteine 102–cysteine 108. Positions 183 to 264 (NYLAVLVKYV…NWRPDAVYTS (82 aa)) constitute an Expansin-like CBD domain.

Belongs to the expansin family. Expansin B subfamily. In terms of tissue distribution, expressed in anthers and pollen.

The protein resides in the secreted. It is found in the cell wall. It localises to the membrane. Functionally, may aid fertilization by loosening the cell wall of the stigma and style, thereby facilitating penetration of the pollen tube. Acts selectively on grass cell walls, which are relatively poor in pectins and xyloglucans and rich in glucuronoarabinoxylans and (1-3),(1-4)-beta-D-glucans, when compared with cell walls of other angiosperms, including other monocots. This is Expansin-B1 (EXPB1) from Zea mays (Maize).